The primary structure comprises 493 residues: Envelope glycoprotein gp63 (493 aa).

The N-terminal stretch at 1-22 (MGKSGLYFSLICFYTLFPSSFG) is a signal peptide. Topologically, residues 23-446 (NPSRCTLFIG…GLSQWAREAL (424 aa)) are extracellular. Residues Asn140 and Asn222 are each glycosylated (N-linked (GlcNAc...) asparagine; by host). The CXXC motif lies at 225–228 (CMVC). 3 cysteine pairs are disulfide-bonded: Cys225/Cys228, Cys225/Cys404, and Cys396/Cys403. Asn292 is a glycosylation site (N-linked (GlcNAc...) asparagine; by host). The interval 316–336 (AVPIAIWLVSALAAGTGIAGG) is fusion peptide. 2 coiled-coil regions span residues 344 to 390 (ASSK…LLFW) and 400 to 432 (QEQC…GWGL). Positions 379-395 (AQNRRGLDLLFWEQGGL) are immunosuppression. A CX6CC motif is present at residues 396–404 (CKAIQEQCC). Residue Asn407 is glycosylated (N-linked (GlcNAc...) asparagine; by host). A helical transmembrane segment spans residues 447–467 (QTGITLLALFLLLIVVGPCVI). Cys465 carries the S-palmitoyl cysteine; by host lipid modification. The Cytoplasmic portion of the chain corresponds to 468 to 493 (RQLQTLPSRLQHRSQPYSLLNYETNL).

As to quaternary structure, the mature envelope protein (Env) consists of a trimer of SU-TM heterodimers attached by a labile interchain disulfide bond. Specific enzymatic cleavages in vivo yield mature proteins. Envelope glycoproteins are synthesized as an inactive precursor that is N-glycosylated and processed likely by host cell furin or by a furin-like protease in the Golgi to yield the mature SU and TM proteins. The cleavage site between SU and TM requires the minimal sequence [KR]-X-[KR]-R. Post-translationally, the CXXC motif is highly conserved across a broad range of retroviral envelope proteins. It is thought to participate in the formation of a labile disulfide bond possibly with the CX6CC motif present in the transmembrane protein. Isomerization of the intersubunit disulfide bond to an SU intrachain disulfide bond is thought to occur upon receptor recognition in order to allow membrane fusion. In terms of processing, the transmembrane protein is palmitoylated.

It localises to the virion membrane. The protein resides in the host cell membrane. The surface protein (SU) attaches the virus to the host cell by binding to its receptor. This interaction triggers the refolding of the transmembrane protein (TM) and is thought to activate its fusogenic potential by unmasking its fusion peptide. Fusion occurs at the host cell plasma membrane. Functionally, the transmembrane protein (TM) acts as a class I viral fusion protein. Under the current model, the protein has at least 3 conformational states: pre-fusion native state, pre-hairpin intermediate state, and post-fusion hairpin state. During viral and target cell membrane fusion, the coiled coil regions (heptad repeats) assume a trimer-of-hairpins structure, positioning the fusion peptide in close proximity to the C-terminal region of the ectodomain. The formation of this structure appears to drive apposition and subsequent fusion of viral and target cell membranes. Membranes fusion leads to delivery of the nucleocapsid into the cytoplasm. The polypeptide is Envelope glycoprotein gp63 (env) (Human T-cell leukemia virus 3 (strain Pyl43) (HTLV-3)).